The sequence spans 165 residues: UPF0114 protein in repA1-repA2 intergenic region (165 aa).

The next 3 membrane-spanning stretches (helical) occupy residues 10 to 32, 53 to 75, and 136 to 155; these read YASRWLMFPVYIGLSFGFILLTL, LILIVLSLIDIALVGGLLVMVMF, and IMWCVIIHLTFVLSAFGMAC.

Belongs to the UPF0114 family.

It is found in the cell membrane. This chain is UPF0114 protein in repA1-repA2 intergenic region, found in Buchnera aphidicola subsp. Geoica urticularia.